The primary structure comprises 158 residues: Endoribonuclease YbeY (158 aa).

Zn(2+) is bound by residues His-119, His-123, and His-129.

Belongs to the endoribonuclease YbeY family. Requires Zn(2+) as cofactor.

Its subcellular location is the cytoplasm. Functionally, single strand-specific metallo-endoribonuclease involved in late-stage 70S ribosome quality control and in maturation of the 3' terminus of the 16S rRNA. This Shewanella woodyi (strain ATCC 51908 / MS32) protein is Endoribonuclease YbeY.